Reading from the N-terminus, the 72-residue chain is SPbeta prophage-derived uncharacterized protein YoqN (72 aa).

This Bacillus subtilis (strain 168) protein is SPbeta prophage-derived uncharacterized protein YoqN (yoqN).